We begin with the raw amino-acid sequence, 125 residues long: Methylglyoxal synthase (125 aa).

Positions 1–125 (MTQRLRIALI…TAEKLVRALD (125 aa)) constitute an MGS-like domain. Substrate-binding positions include His12, Lys16, 38-41 (TGTT), and 59-60 (SG). Residue Asp65 is the Proton donor/acceptor of the active site. His92 is a substrate binding site.

The protein belongs to the methylglyoxal synthase family.

The enzyme catalyses dihydroxyacetone phosphate = methylglyoxal + phosphate. Catalyzes the formation of methylglyoxal from dihydroxyacetone phosphate. This Brucella abortus (strain S19) protein is Methylglyoxal synthase.